A 323-amino-acid polypeptide reads, in one-letter code: tRNA U34 carboxymethyltransferase (323 aa).

Carboxy-S-adenosyl-L-methionine contacts are provided by residues lysine 91, tryptophan 105, lysine 110, glycine 130, 181–182, methionine 196, tyrosine 200, and arginine 315; that span reads IE.

Belongs to the class I-like SAM-binding methyltransferase superfamily. CmoB family. In terms of assembly, homotetramer.

It catalyses the reaction carboxy-S-adenosyl-L-methionine + 5-hydroxyuridine(34) in tRNA = 5-carboxymethoxyuridine(34) in tRNA + S-adenosyl-L-homocysteine + H(+). Its function is as follows. Catalyzes carboxymethyl transfer from carboxy-S-adenosyl-L-methionine (Cx-SAM) to 5-hydroxyuridine (ho5U) to form 5-carboxymethoxyuridine (cmo5U) at position 34 in tRNAs. In Yersinia pestis bv. Antiqua (strain Antiqua), this protein is tRNA U34 carboxymethyltransferase.